We begin with the raw amino-acid sequence, 430 residues long: 3-phosphoshikimate 1-carboxyvinyltransferase (430 aa).

Lys23, Ser24, and Arg28 together coordinate 3-phosphoshikimate. Position 23 (Lys23) interacts with phosphoenolpyruvate. Phosphoenolpyruvate is bound by residues Gly95 and Arg123. Positions 169, 171, 315, and 342 each coordinate 3-phosphoshikimate. Gln171 provides a ligand contact to phosphoenolpyruvate. Asp315 functions as the Proton acceptor in the catalytic mechanism. The phosphoenolpyruvate site is built by Arg346 and Arg388.

It belongs to the EPSP synthase family. In terms of assembly, monomer.

It localises to the cytoplasm. It catalyses the reaction 3-phosphoshikimate + phosphoenolpyruvate = 5-O-(1-carboxyvinyl)-3-phosphoshikimate + phosphate. Its pathway is metabolic intermediate biosynthesis; chorismate biosynthesis; chorismate from D-erythrose 4-phosphate and phosphoenolpyruvate: step 6/7. Catalyzes the transfer of the enolpyruvyl moiety of phosphoenolpyruvate (PEP) to the 5-hydroxyl of shikimate-3-phosphate (S3P) to produce enolpyruvyl shikimate-3-phosphate and inorganic phosphate. In Streptococcus pyogenes serotype M1, this protein is 3-phosphoshikimate 1-carboxyvinyltransferase.